Consider the following 382-residue polypeptide: D-galactonate dehydratase (382 aa).

D183 is a Mg(2+) binding site. The active-site Proton donor is H185. 2 residues coordinate Mg(2+): E209 and E235. Residue H285 is the Proton acceptor of the active site. Residues 361 to 382 (NENPPDWRNPVWRHSDGSIAEW) are disordered.

This sequence belongs to the mandelate racemase/muconate lactonizing enzyme family. GalD subfamily. Mg(2+) is required as a cofactor.

It carries out the reaction D-galactonate = 2-dehydro-3-deoxy-D-galactonate + H2O. It participates in carbohydrate acid metabolism; D-galactonate degradation; D-glyceraldehyde 3-phosphate and pyruvate from D-galactonate: step 1/3. Catalyzes the dehydration of D-galactonate to 2-keto-3-deoxy-D-galactonate. In Xanthomonas euvesicatoria pv. vesicatoria (strain 85-10) (Xanthomonas campestris pv. vesicatoria), this protein is D-galactonate dehydratase.